Consider the following 382-residue polypeptide: MVKLFSFLLLVWVASPAFSSEFLKASGSNFYYGGQKVFLSGVNFAWRSYGSDFGNGQYASNGPALKDWINKVKASGGNTARVWVHVEGQVSPAFDSHGFVTSTDSKKTLINDLSDLLDYANGQNVFLILVLFNGALQNNSNVQNLFWDESKLNSYINNALTPMVNALKSKPSLAAWEVLNEPEGTLQPGSDQNSCYDTSTLAAQGAGWGGKKFPMKQILKTINWISSAIHNADSKALVTVGSWSELTQTDSFGYRNHYKDSCLTGAGGKSNGIINFYQMHTYSHSGKWNQNAPFKVNRWAYNVNDKPLLIGEFASVCSQNEGIQNLYKYAYNNGYNGALTWQFNSGGDCSDTYSNQMYGMQALKGQNDQSGGKGGMVSVNIN.

The first 19 residues, M1–S19, serve as a signal peptide directing secretion. Substrate-binding positions include W83, N144, W147–K151, and N180. E181 functions as the Proton donor/acceptor in the catalytic mechanism. Q187, Q204, W208, W243, Y282, and H284 together coordinate substrate. Residues C195 and C262 are joined by a disulfide bond. E312 acts as the Nucleophile in catalysis. The cysteines at positions 317 and 349 are disulfide-linked. Residues W341 and D348 each coordinate substrate. Residues G346–S350 form an involved in stabilization of the transition state region.

This sequence belongs to the glycosyl hydrolase 5 (cellulase A) family. Monomer.

The protein localises to the secreted. The enzyme catalyses Random hydrolysis of (1-&gt;4)-beta-D-mannosidic linkages in mannans, galactomannans and glucomannans.. With respect to regulation, activated particularly by Ca(2+) and Zn(2+), and to a lesser extent by Na(+), K(+), Mg(2+) and Cu(2+). Activation effect of the divalent metal ions Ca(2+), Zn(2+), Mg(2+) and Cu(2+) is reduced significantly by the addition of EDTA. Strongly inhibited by Mn(2+), Hg(2+) and Ag(+). Functionally, hydrolyzes 1,4-beta linked polysaccharide backbones of mannans. Has high activity toward locust bean gum. Also active toward konjac and beta-1,4-mannan. Hydrolyzes mannotetraose (M4) and mannopentaose (M5) to mannobiose (M2) and mannotriose (M3) with a little production of mannose (M1). Hydrolyzes beta-1,4-mannan to M2, M3 and M4. Hardly hydrolyzes M2 and M3. Does not hydrolyze p-nitrophenyl-beta-D-mannopyranoside, gua-gum, carboxymethyl cellulose, soluble starch or laminarin. This Cryptopygus antarcticus (Antarctic springtail) protein is Mannan endo-1,4-beta-mannosidase.